The following is a 310-amino-acid chain: Protein OS-9 homolog (310 aa).

The N-terminal stretch at 1-40 is a signal peptide; the sequence is MFSSSMFPHLILPAIGSSKVRTMVLPFAFVGFFIFPICLA. 3 N-linked (GlcNAc...) asparagine glycosylation sites follow: N60, N97, and N104. In terms of domain architecture, MRH spans 129-255; that stretch reads NVFLIENRGY…TIHVPGLCSL (127 aa). Residues W139 and Q151 each contribute to the a mannooligosaccharide derivative site. N-linked (GlcNAc...) asparagine glycosylation is present at N204. Disulfide bonds link C208/C241 and C223/C253. 4 residues coordinate a mannooligosaccharide derivative: D209, R215, E237, and Y243. Composition is skewed to basic and acidic residues over residues 282–292 and 301–310; these read VDHKDSQHVVD and EVKEVETQSS. The interval 282 to 310 is disordered; that stretch reads VDHKDSQHVVDEVAQTSPPEVKEVETQSS.

Belongs to the OS-9 family. As to quaternary structure, interacts with missfolded ER lumenal proteins.

The protein localises to the endoplasmic reticulum membrane. Lectin involved in the quality control of the secretory pathway. As a member of the endoplasmic reticulum-associated degradation lumenal (ERAD-L) surveillance system, targets misfolded endoplasmic reticulum lumenal glycoproteins for degradation. This Schizosaccharomyces pombe (strain 972 / ATCC 24843) (Fission yeast) protein is Protein OS-9 homolog (yos9).